The following is an 87-amino-acid chain: Small ribosomal subunit protein bS20 (87 aa).

It belongs to the bacterial ribosomal protein bS20 family.

Functionally, binds directly to 16S ribosomal RNA. This chain is Small ribosomal subunit protein bS20, found in Mycoplasma pneumoniae (strain ATCC 29342 / M129 / Subtype 1) (Mycoplasmoides pneumoniae).